A 391-amino-acid chain; its full sequence is 3-ketoacyl-CoA thiolase, peroxisomal (391 aa).

The active-site Acyl-thioester intermediate is the cysteine 92. Residues histidine 335 and cysteine 366 each act as proton acceptor in the active site.

It belongs to the thiolase-like superfamily. Thiolase family. In terms of assembly, homodimer.

Its subcellular location is the peroxisome. It carries out the reaction an acyl-CoA + acetyl-CoA = a 3-oxoacyl-CoA + CoA. Its pathway is lipid metabolism; fatty acid metabolism. This chain is 3-ketoacyl-CoA thiolase, peroxisomal (FOX3), found in Encephalitozoon cuniculi (strain GB-M1) (Microsporidian parasite).